The sequence spans 196 residues: GTP cyclohydrolase-2 (196 aa).

Residue 49–53 (RIHSE) coordinates GTP. Residues cysteine 54, cysteine 65, and cysteine 67 each contribute to the Zn(2+) site. GTP is bound by residues glutamine 70, 92 to 94 (EGR), and threonine 114. Aspartate 126 (proton acceptor) is an active-site residue. Arginine 128 acts as the Nucleophile in catalysis. The GTP site is built by threonine 149 and lysine 154.

The protein belongs to the GTP cyclohydrolase II family. In terms of assembly, homodimer. The cofactor is Zn(2+).

It carries out the reaction GTP + 4 H2O = 2,5-diamino-6-hydroxy-4-(5-phosphoribosylamino)-pyrimidine + formate + 2 phosphate + 3 H(+). It participates in cofactor biosynthesis; riboflavin biosynthesis; 5-amino-6-(D-ribitylamino)uracil from GTP: step 1/4. In terms of biological role, catalyzes the conversion of GTP to 2,5-diamino-6-ribosylamino-4(3H)-pyrimidinone 5'-phosphate (DARP), formate and pyrophosphate. In Hamiltonella defensa subsp. Acyrthosiphon pisum (strain 5AT), this protein is GTP cyclohydrolase-2.